Here is a 202-residue protein sequence, read N- to C-terminus: FMN-dependent NADH:quinone oxidoreductase (202 aa).

Residues Ser-9 and 95–98 (MYNF) contribute to the FMN site.

Belongs to the azoreductase type 1 family. In terms of assembly, homodimer. FMN serves as cofactor.

The enzyme catalyses 2 a quinone + NADH + H(+) = 2 a 1,4-benzosemiquinone + NAD(+). It carries out the reaction N,N-dimethyl-1,4-phenylenediamine + anthranilate + 2 NAD(+) = 2-(4-dimethylaminophenyl)diazenylbenzoate + 2 NADH + 2 H(+). Functionally, quinone reductase that provides resistance to thiol-specific stress caused by electrophilic quinones. Also exhibits azoreductase activity. Catalyzes the reductive cleavage of the azo bond in aromatic azo compounds to the corresponding amines. This Chromobacterium violaceum (strain ATCC 12472 / DSM 30191 / JCM 1249 / CCUG 213 / NBRC 12614 / NCIMB 9131 / NCTC 9757 / MK) protein is FMN-dependent NADH:quinone oxidoreductase.